Reading from the N-terminus, the 265-residue chain is GTP cyclohydrolase FolE2 (265 aa).

It belongs to the GTP cyclohydrolase IV family.

It carries out the reaction GTP + H2O = 7,8-dihydroneopterin 3'-triphosphate + formate + H(+). It functions in the pathway cofactor biosynthesis; 7,8-dihydroneopterin triphosphate biosynthesis; 7,8-dihydroneopterin triphosphate from GTP: step 1/1. In terms of biological role, converts GTP to 7,8-dihydroneopterin triphosphate. This chain is GTP cyclohydrolase FolE2, found in Bordetella bronchiseptica (strain ATCC BAA-588 / NCTC 13252 / RB50) (Alcaligenes bronchisepticus).